We begin with the raw amino-acid sequence, 193 residues long: Recombination protein RecR (193 aa).

A C4-type zinc finger spans residues 61 to 76 (CTSCNALSESEVCEIC). The region spanning 84 to 170 (SQLCMVLHPR…TFTKIAQGVP (87 aa)) is the Toprim domain.

This sequence belongs to the RecR family.

In terms of biological role, may play a role in DNA repair. It seems to be involved in an RecBC-independent recombinational process of DNA repair. It may act with RecF and RecO. This is Recombination protein RecR from Helicobacter pylori (strain HPAG1).